The following is a 266-amino-acid chain: Ribosomal RNA small subunit methyltransferase A (266 aa).

S-adenosyl-L-methionine-binding residues include Asn-10, Ile-12, Gly-37, Glu-58, Asp-82, and Asn-105.

Belongs to the class I-like SAM-binding methyltransferase superfamily. rRNA adenine N(6)-methyltransferase family. RsmA subfamily.

The protein resides in the cytoplasm. It carries out the reaction adenosine(1518)/adenosine(1519) in 16S rRNA + 4 S-adenosyl-L-methionine = N(6)-dimethyladenosine(1518)/N(6)-dimethyladenosine(1519) in 16S rRNA + 4 S-adenosyl-L-homocysteine + 4 H(+). Its function is as follows. Specifically dimethylates two adjacent adenosines (A1518 and A1519) in the loop of a conserved hairpin near the 3'-end of 16S rRNA in the 30S particle. May play a critical role in biogenesis of 30S subunits. The polypeptide is Ribosomal RNA small subunit methyltransferase A (Mycoplasma capricolum subsp. capricolum (strain California kid / ATCC 27343 / NCTC 10154)).